The chain runs to 197 residues: Isochorismatase domain-containing protein 2 (197 aa).

The protein belongs to the isochorismatase family.

In Danio rerio (Zebrafish), this protein is Isochorismatase domain-containing protein 2 (isoc2).